The following is a 295-amino-acid chain: Tyrosine recombinase XerD (295 aa).

The Core-binding (CB) domain maps to 1–85 (MDTIIEEYLK…TIRSFHQFAL (85 aa)). The Tyr recombinase domain maps to 106 to 289 (KLPDVLEINE…SKSQIRKMYN (184 aa)). Residues Arg-146, Lys-170, His-241, Arg-244, and His-267 contribute to the active site. Tyr-276 serves as the catalytic O-(3'-phospho-DNA)-tyrosine intermediate.

Belongs to the 'phage' integrase family. XerD subfamily. As to quaternary structure, forms a cyclic heterotetrameric complex composed of two molecules of XerC and two molecules of XerD.

The protein localises to the cytoplasm. Functionally, site-specific tyrosine recombinase, which acts by catalyzing the cutting and rejoining of the recombining DNA molecules. The XerC-XerD complex is essential to convert dimers of the bacterial chromosome into monomers to permit their segregation at cell division. It also contributes to the segregational stability of plasmids. This is Tyrosine recombinase XerD from Staphylococcus saprophyticus subsp. saprophyticus (strain ATCC 15305 / DSM 20229 / NCIMB 8711 / NCTC 7292 / S-41).